Here is a 400-residue protein sequence, read N- to C-terminus: Exodeoxyribonuclease 7 large subunit (400 aa).

This sequence belongs to the XseA family. As to quaternary structure, heterooligomer composed of large and small subunits.

It localises to the cytoplasm. It carries out the reaction Exonucleolytic cleavage in either 5'- to 3'- or 3'- to 5'-direction to yield nucleoside 5'-phosphates.. In terms of biological role, bidirectionally degrades single-stranded DNA into large acid-insoluble oligonucleotides, which are then degraded further into small acid-soluble oligonucleotides. This chain is Exodeoxyribonuclease 7 large subunit, found in Clostridium perfringens (strain ATCC 13124 / DSM 756 / JCM 1290 / NCIMB 6125 / NCTC 8237 / Type A).